The chain runs to 320 residues: MKVLWAAFLVAFLAGCQGKVEQVVEPELGPEPELHPQADWQSGQPWELALGRFWDYLRWVQTLSEQVQEELLSSQVTQELTALMDETMKELKAYKSELEEQLSPVAEETRARLSKELQAAQARLGADMEDVRSRLAQYRSEVQAMLGQSTDELRARLASHLRKLRKRLLRDVDDLQKRLAVYQAGAREGAERGVSAIRERLGPLVEQGRARAATVGSSLASQPLQERAQAWGERLRARMEEVGSRTRDRLDEVKEQVEEVRAKLEEQAQQMRLQAEAFQARLKSWFEPLVEDMQRQWAGLVEKVQAAVGASATPVPSDNH.

Residues 1-18 (MKVLWAAFLVAFLAGCQG) form the signal peptide. 8 repeat units span residues 82-103 (ALMD…EQLS), 104-125 (PVAE…ARLG), 126-147 (ADME…AMLG), 148-169 (QSTD…KRLL), 170-191 (RDVD…EGAE), 192-213 (RGVS…ARAA), 214-236 (TVGS…ERLR), and 237-258 (ARME…EQVE). Residues 82-199 (ALMDETMKEL…AERGVSAIRE (118 aa)) form an 8 X 22 AA approximate tandem repeats region. Methionine 145 carries the methionine sulfoxide modification. A Phosphoserine modification is found at serine 149. The interval 160 to 170 (HLRKLRKRLLR) is LDL and other lipoprotein receptors binding. 164–167 (LRKR) is a binding site for heparin. A lipid-binding and lipoprotein association region spans residues 212–293 (AATVGSSLAS…SWFEPLVEDM (82 aa)). Residue 232-239 (GERLRARM) participates in heparin binding. Positions 269–320 (QQMRLQAEAFQARLKSWFEPLVEDMQRQWAGLVEKVQAAVGASATPVPSDNH) are homooligomerization. Residues 281 to 293 (RLKSWFEPLVEDM) are specificity for association with VLDL.

It belongs to the apolipoprotein A1/A4/E family. In terms of assembly, homotetramer. May interact with ABCA1; functionally associated with ABCA1 in the biogenesis of HDLs. May interact with APP/A4 amyloid-beta peptide; the interaction is extremely stable in vitro but its physiological significance is unclear. May interact with MAPT. May interact with MAP2. In the cerebrospinal fluid, interacts with secreted SORL1. Interacts with PMEL; this allows the loading of PMEL luminal fragment on ILVs to induce fibril nucleation. Post-translationally, APOE exists as multiple glycosylated and sialylated glycoforms within cells and in plasma. The extent of glycosylation and sialylation are tissue and context specific. Glycated in plasma VLDL. In terms of processing, phosphorylated by FAM20C in the extracellular medium.

It localises to the secreted. It is found in the extracellular space. The protein localises to the extracellular matrix. Its subcellular location is the extracellular vesicle. The protein resides in the endosome. It localises to the multivesicular body. In terms of biological role, APOE is an apolipoprotein, a protein associating with lipid particles, that mainly functions in lipoprotein-mediated lipid transport between organs via the plasma and interstitial fluids. APOE is a core component of plasma lipoproteins and is involved in their production, conversion and clearance. Apolipoproteins are amphipathic molecules that interact both with lipids of the lipoprotein particle core and the aqueous environment of the plasma. As such, APOE associates with chylomicrons, chylomicron remnants, very low density lipoproteins (VLDL) and intermediate density lipoproteins (IDL) but shows a preferential binding to high-density lipoproteins (HDL). It also binds a wide range of cellular receptors including the LDL receptor/LDLR, the LDL receptor-related proteins LRP1, LRP2 and LRP8 and the very low-density lipoprotein receptor/VLDLR that mediate the cellular uptake of the APOE-containing lipoprotein particles. Finally, APOE also has a heparin-binding activity and binds heparan-sulfate proteoglycans on the surface of cells, a property that supports the capture and the receptor-mediated uptake of APOE-containing lipoproteins by cells. A main function of APOE is to mediate lipoprotein clearance through the uptake of chylomicrons, VLDLs, and HDLs by hepatocytes. APOE is also involved in the biosynthesis by the liver of VLDLs as well as their uptake by peripheral tissues ensuring the delivery of triglycerides and energy storage in muscle, heart and adipose tissues. By participating in the lipoprotein-mediated distribution of lipids among tissues, APOE plays a critical role in plasma and tissues lipid homeostasis. APOE is also involved in two steps of reverse cholesterol transport, the HDLs-mediated transport of cholesterol from peripheral tissues to the liver, and thereby plays an important role in cholesterol homeostasis. First, it is functionally associated with ABCA1 in the biogenesis of HDLs in tissues. Second, it is enriched in circulating HDLs and mediates their uptake by hepatocytes. APOE also plays an important role in lipid transport in the central nervous system, regulating neuron survival and sprouting. The sequence is that of Apolipoprotein E (APOE) from Saimiri boliviensis boliviensis (Bolivian squirrel monkey).